We begin with the raw amino-acid sequence, 274 residues long: (R)-stereoselective amidase (274 aa).

In terms of domain architecture, CN hydrolase spans 1–234 (MKIELVQLAG…EVRHVVELDL (234 aa)). Glutamate 40 acts as the Proton acceptor in catalysis. Lysine 108 serves as the catalytic Proton donor. Residue cysteine 140 is the Nucleophile of the active site.

As to quaternary structure, monomer.

It carries out the reaction (R)-piperazine-2-carboxamide + H2O = (R)-piperazine-2-carboxylate + NH4(+). The enzyme catalyses beta-alaninamide + H2O = beta-alanine + NH4(+). Its activity is regulated as follows. Completely inhibited by p-chloromercuribenzoate, N-ethylmaleimide, MnSO(4), MnCl(2), CoCl(2), NiCl(2), CuSO(4), CuCl(2), ZnSO(4), ZnCl(2), AgNO(3), CdCl(2), HgCl(2) and PbCl(2). Partially inhibited by FeCl(3) and Fe(NH(4))(2)(SO(4))(2). Slightly enhanced by dithiothreitol. Unaffected by LiBr, H(2)BO(3), NaCl, MgSO(4), MgCl(2), AlCl(3), KCl, CaCl(2), CrCl(3), RbCl, Na(2)MoO(4), (NH(4))(6)Mo(7)O(24), CsCl and BaCl(2). Unaffected by the chelating agents o-phenanthroline, 8-hydroxyquinoline, enthylenediaminetetraacetic acid and alpha,alpha'-dipyridyl. Not inhibited by the carbonyl reagents hydroxylamine, phenylhydrazine, hydrazine, D,L-penicillamine and D-cycloserine. Not affected by the serine protease inhibitor phenylmethanesulfonyl fluoride, the serine/cysteine protease inhibitor leupeptine or the aspartic protease inhibitor pepstatin. Its function is as follows. Hydrolyzes (R)-piperazine-2-carboxamide and (R)-piperazine-2-tert-butylcarboxamide with strict R-stereoselectivity. Also active towards beta-alaninamide, piperidine-3-carboxmide, D-glutaminamide and slightly active towards L-glutaminamide and piperidine-4-carboxamide. This chain is (R)-stereoselective amidase, found in Pseudomonas sp.